Here is a 236-residue protein sequence, read N- to C-terminus: Hydantoin racemase (236 aa).

In terms of assembly, homohexamer, homoheptamer or homooctamer.

It carries out the reaction a D-5-monosubstituted hydantoin = a L-5-monosubstituted hydantoin. It catalyses the reaction D-5-benzylhydantoin = L-5-benzylhydantoin. Its activity is regulated as follows. Completely inhibited by HgCl(2) and iodoacetamide. Stimulated by dithiothreitol. Functionally, involved in the asymmetric conversion of racemic 5-substituted hydantoins to the corresponding L-amino acids. Catalyzes the racemization via enolization of D- and L-5-monosubstituted hydantoins. It shows preference for hydantoins with arylalkyl side chains such as 5-benzylhydantoin (BH) and, to a lesser extent, 5-(3-indolylmethylene)hydantoin (IMH). This chain is Hydantoin racemase, found in Paenarthrobacter aurescens (Arthrobacter aurescens).